The following is a 203-amino-acid chain: Small ribosomal subunit protein uS4 (203 aa).

The S4 RNA-binding domain occupies 93 to 173 (RRFDNVVFRS…IPSWIQVDKA (81 aa)).

Belongs to the universal ribosomal protein uS4 family. In terms of assembly, part of the 30S ribosomal subunit. Contacts protein S5. The interaction surface between S4 and S5 is involved in control of translational fidelity.

In terms of biological role, one of the primary rRNA binding proteins, it binds directly to 16S rRNA where it nucleates assembly of the body of the 30S subunit. Its function is as follows. With S5 and S12 plays an important role in translational accuracy. The chain is Small ribosomal subunit protein uS4 from Chlorobium phaeobacteroides (strain DSM 266 / SMG 266 / 2430).